The chain runs to 410 residues: Neuroserpin (410 aa).

A signal peptide spans 1–16 (MTYLELLALLALQSVV). N-linked (GlcNAc...) asparagine glycans are attached at residues Asn-157, Asn-321, and Asn-401. An O-linked (Xyl...) (chondroitin sulfate) serine glycan is attached at Ser-403.

The protein belongs to the serpin family. Detected in neurons in embryonic brain cortex (at protein level). During embryonic development mostly expressed in CNS. In adult expressed in brain and much less in spinal cord, heart, kidney and testis.

It is found in the secreted. The protein resides in the cytoplasmic vesicle. It localises to the secretory vesicle lumen. The protein localises to the perikaryon. Functionally, serine protease inhibitor that inhibits plasminogen activators and plasmin but not thrombin. May be involved in the formation or reorganization of synaptic connections as well as for synaptic plasticity in the adult nervous system. May protect neurons from cell damage by tissue-type plasminogen activator. In Mus musculus (Mouse), this protein is Neuroserpin (Serpini1).